The primary structure comprises 300 residues: uncharacterized protein (300 aa).

The first 19 residues, 1–19, serve as a signal peptide directing secretion; sequence MKLKLLLIPLLGSSLLLSA. Cys-20 carries the N-palmitoyl cysteine lipid modification. Cys-20 carries the S-diacylglycerol cysteine lipid modification.

The protein belongs to the MG439/MG440 family.

It localises to the cell membrane. This is an uncharacterized protein from Mycoplasma pneumoniae (strain ATCC 29342 / M129 / Subtype 1) (Mycoplasmoides pneumoniae).